Here is a 187-residue protein sequence, read N- to C-terminus: DNA-directed RNA polymerase subunit Rpo7 (187 aa).

The region spanning 82-166 is the S1 motif domain; the sequence is YELIEGEVVD…RGSKIALTMR (85 aa).

The protein belongs to the eukaryotic RPB7/RPC8 RNA polymerase subunit family. In terms of assembly, part of the RNA polymerase complex. Forms a stalk with Rpo4 that extends from the main structure.

It localises to the cytoplasm. It carries out the reaction RNA(n) + a ribonucleoside 5'-triphosphate = RNA(n+1) + diphosphate. DNA-dependent RNA polymerase (RNAP) catalyzes the transcription of DNA into RNA using the four ribonucleoside triphosphates as substrates. This Methanocaldococcus jannaschii (strain ATCC 43067 / DSM 2661 / JAL-1 / JCM 10045 / NBRC 100440) (Methanococcus jannaschii) protein is DNA-directed RNA polymerase subunit Rpo7.